We begin with the raw amino-acid sequence, 564 residues long: Potassium-transporting ATPase potassium-binding subunit (564 aa).

A run of 10 helical transmembrane segments spans residues 4 to 24 (YDFA…PWLG), 67 to 87 (TLAL…VLLL), 135 to 155 (LGLT…LVVL), 179 to 199 (LYGL…QGVP), 258 to 278 (FEVA…GHYV), 286 to 306 (AILA…LWSE), 382 to 402 (AGLY…GLMI), 420 to 440 (LLVA…AIAA), 487 to 507 (LMIG…ILAL), and 533 to 553 (GLLL…TLAL).

This sequence belongs to the KdpA family. In terms of assembly, the system is composed of three essential subunits: KdpA, KdpB and KdpC.

It localises to the cell inner membrane. In terms of biological role, part of the high-affinity ATP-driven potassium transport (or Kdp) system, which catalyzes the hydrolysis of ATP coupled with the electrogenic transport of potassium into the cytoplasm. This subunit binds the periplasmic potassium ions and delivers the ions to the membrane domain of KdpB through an intramembrane tunnel. The chain is Potassium-transporting ATPase potassium-binding subunit from Pseudomonas putida (strain ATCC 47054 / DSM 6125 / CFBP 8728 / NCIMB 11950 / KT2440).